The chain runs to 96 residues: RNA-binding protein Hfq (96 aa).

A Sm domain is found at 9 to 68 (DPYLNALRRERIPVSIYLVNGIKLQGQIESFDQFVILLKNTVNQMVYKHAISTVVPARSV).

It belongs to the Hfq family. In terms of assembly, homohexamer.

Its function is as follows. RNA chaperone that binds small regulatory RNA (sRNAs) and mRNAs to facilitate mRNA translational regulation in response to envelope stress, environmental stress and changes in metabolite concentrations. Also binds with high specificity to tRNAs. The protein is RNA-binding protein Hfq of Histophilus somni (strain 129Pt) (Haemophilus somnus).